The primary structure comprises 374 residues: F(420)H(2) dehydrogenase subunit D (374 aa).

This sequence belongs to the complex I 49 kDa subunit family. In terms of assembly, the FPO complex is composed of at least 13 different subunits.

Its subcellular location is the cell inner membrane. It carries out the reaction methanophenazine + reduced coenzyme F420-(gamma-L-Glu)(n) = dihydromethanophenazine + oxidized coenzyme F420-(gamma-L-Glu)(n) + H(+). Its function is as follows. Component of the F(420)H(2) dehydrogenase (FPO complex) which is part of the energy-conserving F(420)H(2):heterodisulfide oxidoreductase system. The membrane-bound electron transfer system of the complex plays an important role in the metabolism of methylotrophic methanogens when the organisms grow on methanol or methylamines. Catalyzes the oxidation of methanophenazine to dihydromethanophenazine. It shuttles electrons from F(420)H(2), via FAD and iron-sulfur (Fe-S) centers, to methanophenazine (an electron carrier in the membrane). It couples the redox reaction to proton translocation (for every two electrons transferred, two hydrogen ions are translocated across the cytoplasmic membrane), and thus conserves the redox energy in a proton gradient. It also catalyzes the oxidation of F(420)H(2) with quinones such as 2,3-dimethyl-1,4-naphthoquinone, 2-methyl-1,4-naphthoquinone and tetramethyl-p-benzoquinone. The polypeptide is F(420)H(2) dehydrogenase subunit D (fpoD) (Methanosarcina mazei (strain ATCC BAA-159 / DSM 3647 / Goe1 / Go1 / JCM 11833 / OCM 88) (Methanosarcina frisia)).